Consider the following 1018-residue polypeptide: Probable inorganic carbon transporter subunit DabA 2 (1018 aa).

Zn(2+)-binding residues include Cys-489, Asp-491, His-674, and Cys-689.

The protein belongs to the inorganic carbon transporter (TC 9.A.2) DabA family. As to quaternary structure, forms a complex with DabB. It depends on Zn(2+) as a cofactor.

The protein localises to the cell inner membrane. Functionally, part of an energy-coupled inorganic carbon pump. This is Probable inorganic carbon transporter subunit DabA 2 from Sorangium cellulosum (strain So ce56) (Polyangium cellulosum (strain So ce56)).